A 226-amino-acid chain; its full sequence is Phosphoglycolate phosphatase (226 aa).

Asp-9 serves as the catalytic Nucleophile. 2 residues coordinate Mg(2+): Asp-9 and Asp-11. Lys-150 contacts substrate. Mg(2+)-binding residues include Asp-173 and Asp-177.

The protein belongs to the archaeal SPP-like hydrolase family. Requires Mg(2+) as cofactor.

The catalysed reaction is 2-phosphoglycolate + H2O = glycolate + phosphate. Functionally, catalyzes the dephosphorylation of 2-phosphoglycolate. The chain is Phosphoglycolate phosphatase from Methanococcoides burtonii (strain DSM 6242 / NBRC 107633 / OCM 468 / ACE-M).